The chain runs to 308 residues: Glycosyltransferase 6 domain-containing protein 1 (308 aa).

Over 1–6 (MNSKRM) the chain is Cytoplasmic. Residues 7 to 23 (LLLVLFAFSLMLVERYF) traverse the membrane as a helical; Signal-anchor for type II membrane protein segment. At 24–308 (RNHQVEELRL…KVAHDSHRKL (285 aa)) the chain is on the lumenal side. An N-linked (GlcNAc...) asparagine glycan is attached at N74. Residues 82 to 87 (FATGRF), 173 to 175 (AVN), and 195 to 198 (HAWW) contribute to the substrate site. E263 serves as the catalytic Nucleophile.

The protein belongs to the glycosyltransferase 6 family. Mn(2+) serves as cofactor.

Its subcellular location is the membrane. In Macaca fascicularis (Crab-eating macaque), this protein is Glycosyltransferase 6 domain-containing protein 1 (GLT6D1).